We begin with the raw amino-acid sequence, 234 residues long: Large ribosomal subunit protein uL1 (234 aa).

This sequence belongs to the universal ribosomal protein uL1 family. Part of the 50S ribosomal subunit.

Its function is as follows. Binds directly to 23S rRNA. The L1 stalk is quite mobile in the ribosome, and is involved in E site tRNA release. Protein L1 is also a translational repressor protein, it controls the translation of the L11 operon by binding to its mRNA. The sequence is that of Large ribosomal subunit protein uL1 from Bdellovibrio bacteriovorus (strain ATCC 15356 / DSM 50701 / NCIMB 9529 / HD100).